The following is a 973-amino-acid chain: UvrABC system protein A (973 aa).

Position 34–41 (34–41) interacts with ATP; it reads GLSGSGKS. 2 ABC transporter domains span residues 331–609 and 629–958; these read WAKS…PKSL and PKKK…QFLK. ATP is bound at residue 662 to 669; it reads GVSGGGKS. Residues 761–787 form a C4-type zinc finger; it reads CEACQGDGVIKIEMHFLPDVYVTCDVC.

Belongs to the ABC transporter superfamily. UvrA family. As to quaternary structure, forms a heterotetramer with UvrB during the search for lesions.

It is found in the cytoplasm. Functionally, the UvrABC repair system catalyzes the recognition and processing of DNA lesions. UvrA is an ATPase and a DNA-binding protein. A damage recognition complex composed of 2 UvrA and 2 UvrB subunits scans DNA for abnormalities. When the presence of a lesion has been verified by UvrB, the UvrA molecules dissociate. The protein is UvrABC system protein A of Rhizobium meliloti (strain 1021) (Ensifer meliloti).